The primary structure comprises 1274 residues: Enamelin (1274 aa).

Positions 1-38 are cleaved as a signal peptide; it reads MLLLQCRNPTSPPKPCGLVPNVKMSLLVFLGLLGVSAA. A compositionally biased stretch (pro residues) spans 103 to 115; it reads PVPNGWQQPPMPN. 5 disordered regions span residues 103–413, 476–610, 668–700, 712–734, and 753–814; these read PVPN…VGAN, IGAN…NNPN, PFQS…KHFP, LPPL…YGSR, and YIKS…EEMN. Residues 117-127 are compositionally biased toward polar residues; that stretch reads PSKTDQTQETA. Positions 128–142 are enriched in low complexity; that stretch reads KPNQTNPQEPQPQKQ. Asn-130 carries an N-linked (GlcNAc...) asparagine glycan. A compositionally biased stretch (basic and acidic residues) spans 143–158; sequence PLKEPPNEAARAKDDA. A compositionally biased stretch (pro residues) spans 174–185; it reads YPQPPWPIPQRG. Phosphoserine occurs at positions 196 and 219. Over residues 225 to 239 the composition is skewed to basic and acidic residues; it reads DYEKPKEKDPPKPED. The segment covering 249–272 has biased composition (polar residues); that stretch reads ASTNSTVPDANATQSIPEGGNDTS. 3 N-linked (GlcNAc...) asparagine glycosylation sites follow: Asn-252, Asn-259, and Asn-269. Positions 273–287 are enriched in low complexity; sequence PIGNTGPGPNAGNNP. An N-linked (GlcNAc...) asparagine glycan is attached at Asn-300. Residues 318–330 show a composition bias toward low complexity; sequence PNIYENYPYPNYP. 4 stretches are compositionally biased toward polar residues: residues 331 to 344, 486 to 503, 522 to 549, and 565 to 574; these read SERQ…QGPR, SIGT…TNPA, TNPS…QASN, and VTVSHNMKTQ. A compositionally biased stretch (basic and acidic residues) spans 575–587; the sequence is NPKEKSLGQKERT. A compositionally biased stretch (polar residues) spans 588-598; the sequence is VTPTKDASNPW. A compositionally biased stretch (basic and acidic residues) spans 715–727; the sequence is LKEDYGRQDENLR. A compositionally biased stretch (polar residues) spans 753–766; that stretch reads YIKSNPWDKSSPST. Over residues 787–801 the composition is skewed to acidic residues; sequence QYNEEDPIDPNEDES. A glycan (N-linked (GlcNAc...) asparagine) is linked at Asn-1066. Disordered stretches follow at residues 1071–1097 and 1109–1128; these read KLTA…PYSG and SEAS…DLGG.

In terms of processing, phosphorylated by FAM20C in vitro. Expressed in developing teeth.

It is found in the secreted. The protein resides in the extracellular space. The protein localises to the extracellular matrix. In terms of biological role, involved in the mineralization and structural organization of enamel. Involved in the extension of enamel during the secretory stage of dental enamel formation. This Mus musculus (Mouse) protein is Enamelin (Enam).